Reading from the N-terminus, the 122-residue chain is Head fiber dimeric protein (122 aa).

As to quaternary structure, homodimer. Interacts with the major capsid protein.

It localises to the virion. Forms short fibers at the surface of the viral capsid. This Bacteroides intestinalis (Bacteroides phage PhiCrAss001) protein is Head fiber dimeric protein.